The following is a 344-amino-acid chain: Phenylalanine--tRNA ligase alpha subunit (344 aa).

Residue E256 coordinates Mg(2+).

Belongs to the class-II aminoacyl-tRNA synthetase family. Phe-tRNA synthetase alpha subunit type 1 subfamily. In terms of assembly, tetramer of two alpha and two beta subunits. It depends on Mg(2+) as a cofactor.

The protein resides in the cytoplasm. The catalysed reaction is tRNA(Phe) + L-phenylalanine + ATP = L-phenylalanyl-tRNA(Phe) + AMP + diphosphate + H(+). This is Phenylalanine--tRNA ligase alpha subunit from Bacillus mycoides (strain KBAB4) (Bacillus weihenstephanensis).